Here is a 216-residue protein sequence, read N- to C-terminus: Endoplasmic reticulum vesicle protein 25 (216 aa).

A signal peptide spans methionine 1–alanine 21. Residues leucine 22 to lysine 184 lie on the Lumenal side of the membrane. The 117-residue stretch at proline 34–arginine 150 folds into the GOLD domain. The chain crosses the membrane as a helical span at residues asparagine 185–leucine 205. Residues arginine 206 to proline 216 lie on the Cytoplasmic side of the membrane.

This sequence belongs to the EMP24/GP25L family.

The protein resides in the endoplasmic reticulum membrane. Its subcellular location is the golgi apparatus membrane. In terms of biological role, constituent of COPII-coated endoplasmic reticulum-derived transport vesicles. Required for efficient transport of a subset of secretory proteins to the Golgi. Facilitates retrograde transport from the Golgi to the endoplasmic reticulum. This chain is Endoplasmic reticulum vesicle protein 25 (erv25), found in Schizosaccharomyces pombe (strain 972 / ATCC 24843) (Fission yeast).